The chain runs to 1004 residues: Glutamate [NMDA] receptor subunit 1 (1004 aa).

Positions 1–39 (MAGTDSPAAARFVYRCLLFAPAIVVGLLLPLTLPPIAAA) are cleaved as a signal peptide. Over 40–585 (QRHTASDNPS…TLVSFLQPFS (546 aa)) the chain is Extracellular. N-linked (GlcNAc...) asparagine glycans are attached at residues asparagine 270, asparagine 326, asparagine 357, asparagine 409, asparagine 466, asparagine 493, and asparagine 513. Residues 542–544 (PLT) and arginine 549 contribute to the glycine site. Residues 586–606 (NTLWILVMVSVHVVALVLYLL) form a helical membrane-spanning segment. At 607 to 663 (DRFSPFGRFKLSHSDSNEEKALNLSSAVWFAWGVLLNSGIGEGTPRSFSARVLGMVW) the chain is on the cytoplasmic side. A helical membrane pass occupies residues 664-684 (AGFAMIIVASYTANLAAFLVL). At 685–843 (ERPKTKLSGI…KTPNTLGLKN (159 aa)) the chain is on the extracellular side. N-linked (GlcNAc...) asparagine glycosylation is present at asparagine 705. Glycine is bound by residues serine 715 and aspartate 759. The helical transmembrane segment at 844-864 (MAGVFILVGVGIAGGVGLIII) threads the bilayer. Residues 865–1004 (EVIYKKHQVK…YTSDVSHLVV (140 aa)) are Cytoplasmic-facing. Positions 980 to 1004 (TRPQQNILPPRYSPGYTSDVSHLVV) are disordered. The segment covering 994 to 1004 (GYTSDVSHLVV) has biased composition (polar residues).

The protein belongs to the glutamate-gated ion channel (TC 1.A.10.1) family. Forms a heteromeric NMDA channel with Nmdar2.

It localises to the cell membrane. Its subcellular location is the postsynaptic cell membrane. The protein localises to the postsynaptic density. NMDA receptor subtype of glutamate-gated ion channels with high calcium permeability and voltage-dependent sensitivity to magnesium. Mediated by glycine. This protein plays a key role in synaptic plasticity, synaptogenesis, excitotoxicity, memory acquisition and learning. It mediates neuronal functions in glutamate neurotransmission. Is involved in the cell surface targeting of NMDA receptors. Plays a role in associative learning and in long-term memory consolidation. This Drosophila persimilis (Fruit fly) protein is Glutamate [NMDA] receptor subunit 1.